A 248-amino-acid chain; its full sequence is Probable transcriptional regulatory protein Bind_0345 (248 aa).

This sequence belongs to the TACO1 family.

Its subcellular location is the cytoplasm. The polypeptide is Probable transcriptional regulatory protein Bind_0345 (Beijerinckia indica subsp. indica (strain ATCC 9039 / DSM 1715 / NCIMB 8712)).